Consider the following 118-residue polypeptide: Large ribosomal subunit protein uL18 (118 aa).

Belongs to the universal ribosomal protein uL18 family. In terms of assembly, part of the 50S ribosomal subunit; part of the 5S rRNA/L5/L18/L25 subcomplex. Contacts the 5S and 23S rRNAs.

This is one of the proteins that bind and probably mediate the attachment of the 5S RNA into the large ribosomal subunit, where it forms part of the central protuberance. In Campylobacter concisus (strain 13826), this protein is Large ribosomal subunit protein uL18.